The sequence spans 136 residues: HTH-type transcriptional regulator LrpA (136 aa).

The HTH asnC-type domain occupies 2 to 63 (IDEIDKKILD…EVNQVKLGFS (62 aa)). A DNA-binding region (H-T-H motif) is located at residues 21-40 (MKKLGEKVHLTAPATASRVV).

In terms of biological role, negative regulation of glyA transcription and kinB-dependent sporulation. In Bacillus subtilis (strain 168), this protein is HTH-type transcriptional regulator LrpA (lrpA).